The chain runs to 389 residues: Chalcone synthase A (389 aa).

Cys164 is an active-site residue.

It belongs to the thiolase-like superfamily. Chalcone/stilbene synthases family. Major expressed member of the gene family in various floral tissues and in seedlings treated with UV light. It is relatively low expressed in tissue culture material.

The catalysed reaction is (E)-4-coumaroyl-CoA + 3 malonyl-CoA + 3 H(+) = 2',4,4',6'-tetrahydroxychalcone + 3 CO2 + 4 CoA. Its pathway is secondary metabolite biosynthesis; flavonoid biosynthesis. Its function is as follows. The primary product of this enzyme is 4,2',4',6'-tetrahydroxychalcone (also termed naringenin-chalcone or chalcone) which can under specific conditions spontaneously isomerize into naringenin. The polypeptide is Chalcone synthase A (CHSA) (Petunia hybrida (Petunia)).